Consider the following 212-residue polypeptide: MAVKPKTTKAKVELPPFEYPQGYQLVAGVDEVGRGPLVGDVVTAAVILDPNNPIEGLNDSKKLSEKKRLALLPEIKEKALAWAVGRCSPEEIDELNILQATMVAMQRAIAGLKVQPDLALIDGNRCPELPMDSQAVVKGDLRVAEISAASIIAKVVRDQEMEELDKQYPQFGFAKHKGYPTKAHFEAIEQHGVISEHRKSFKPVKKALGIEE.

In terms of domain architecture, RNase H type-2 spans 24 to 212 (QLVAGVDEVG…PVKKALGIEE (189 aa)). Positions 30, 31, and 122 each coordinate a divalent metal cation.

This sequence belongs to the RNase HII family. It depends on Mn(2+) as a cofactor. Mg(2+) serves as cofactor.

The protein localises to the cytoplasm. It carries out the reaction Endonucleolytic cleavage to 5'-phosphomonoester.. Its function is as follows. Endonuclease that specifically degrades the RNA of RNA-DNA hybrids. The protein is Ribonuclease HII of Vibrio campbellii (strain ATCC BAA-1116).